A 193-amino-acid polypeptide reads, in one-letter code: ECF RNA polymerase sigma factor SigK (193 aa).

The tract at residues 35–101 is sigma-70 factor domain-2; the sequence is LYDRTRSRVY…RRAVDRVRSE (67 aa). The Polymerase core binding motif lies at 59–62; sequence ETTQ. Residues 140–187 are sigma-70 factor domain-4; that stretch reads MGSLSDLQREAIQLAYYEGLTYVQVSERLSANLATIKSRMRDGIRGLK. The segment at residues 161–180 is a DNA-binding region (H-T-H motif); sequence YVQVSERLSANLATIKSRMR.

It belongs to the sigma-70 factor family. ECF subfamily. As to quaternary structure, interacts transiently with the RNA polymerase catalytic core formed by RpoA, RpoB, RpoC and RpoZ (2 alpha, 1 beta, 1 beta' and 1 omega subunit) to form the RNA polymerase holoenzyme that can initiate transcription. Interacts (via sigma-70 factor domain 4) with anti-sigma-K factor RskA.

Functionally, sigma factors are initiation factors that promote the attachment of RNA polymerase to specific initiation sites and are then released. Extracytoplasmic function (ECF) sigma factors are held in an inactive form by an anti-sigma factor until released by regulated intramembrane proteolysis. This Mycobacterium sp. (strain JLS) protein is ECF RNA polymerase sigma factor SigK (sigK).